Reading from the N-terminus, the 234-residue chain is Small ribosomal subunit protein eS4 (234 aa).

In terms of domain architecture, S4 RNA-binding spans 37 to 99 (VPLLIVLRDV…REEYYRVFPG (63 aa)).

Belongs to the eukaryotic ribosomal protein eS4 family.

This chain is Small ribosomal subunit protein eS4 (rps4e), found in Haloarcula marismortui (strain ATCC 43049 / DSM 3752 / JCM 8966 / VKM B-1809) (Halobacterium marismortui).